A 274-amino-acid polypeptide reads, in one-letter code: Oxidoreductase BOA17 (274 aa).

Leu-14, Thr-32, Asp-57, Asn-84, and Lys-117 together coordinate NADP(+). Catalysis depends on proton donor residues Ser-135 and Tyr-149. NADP(+) is bound by residues Tyr-149, Lys-153, Ile-182, and Thr-184. The active-site Lowers pKa of active site Tyr is Lys-153.

The protein belongs to the short-chain dehydrogenases/reductases (SDR) family.

It participates in polyketide biosynthesis. Its function is as follows. Oxidoreductase; part of the gene cluster B that mediates the biosynthesis of botcinic acid and its botcinin derivatives, acetate-derived polyketides that contribute to virulence when combined with the sesquiterpene botrydial. Botcinic acid and its derivatives have been shown to induce chlorosis and necrosis during host plant infection, but also have antifungal activities. Two polyketide synthases, BOA6 and BOA9, are involved in the biosynthesis of botcinins. BOA6 mediates the formation of the per-methylated tetraketide core by condensation of four units of malonyl-CoA with one unit of acetyl-CoA, which would be methylated in activated methylene groups to yield a bicyclic acid intermediate that could then either be converted to botrylactone derivatives or lose the starter acetate unit through a retro-Claisen type C-C bond cleavage to yield botcinin derivatives. The second polyketide synthase, BOA9, is probably required for the biosynthesis of the tetraketide side chain of botcinins. The methyltransferase (MT) domain within BOA6 is probably responsible for the incorporation of four methyl groups. The trans-enoyl reductase BOA5 might take over the enoyl reductase function of BOA6 that misses an ER domain. The monooxygenases BOA2, BOA3 and BOA4 might be involved in further hydroxylations at C4, C5 and C8, whereas BOA7, close to BOA9, could potentially be involved in the hydroxylation at C4 in the side chain of botcinins. In Botryotinia fuckeliana (strain B05.10) (Noble rot fungus), this protein is Oxidoreductase BOA17.